We begin with the raw amino-acid sequence, 204 residues long: MSDYTNVSWDNVTYYGGNGVALDELELKVSWHNRPASSWSVRRIGALQHKIEQYTFKIYHVNRYGKHSLSQVIPTHVLIQFANEAFGYNGWSSAVEEVLITDVKQRERVRDGAAIELYTVTAEARVKLTLQDGTNTEATGLSKITLPSKGDAYGKAKKEASADALKRCLLSFEGIVIEHEQKVASNYYTDGEFGSRKAGDKRDR.

The protein belongs to the RAD52 family. Interacts with RAD51 and RAD52.

It is found in the nucleus. Functionally, involved in the repair of double-strand breaks in DNA during vegetative growth via recombination and single-strand annealing. Anneals complementary single-stranded DNA. This Eremothecium gossypii (strain ATCC 10895 / CBS 109.51 / FGSC 9923 / NRRL Y-1056) (Yeast) protein is DNA repair protein RAD59 (RAD59).